We begin with the raw amino-acid sequence, 427 residues long: Trigger factor (427 aa).

In terms of domain architecture, PPIase FKBP-type spans 163–248 (GDTVVIDFVG…IHEVKAKEVP (86 aa)).

It belongs to the FKBP-type PPIase family. Tig subfamily.

The protein resides in the cytoplasm. The catalysed reaction is [protein]-peptidylproline (omega=180) = [protein]-peptidylproline (omega=0). Its function is as follows. Involved in protein export. Acts as a chaperone by maintaining the newly synthesized protein in an open conformation. Functions as a peptidyl-prolyl cis-trans isomerase. This is Trigger factor from Streptococcus pneumoniae (strain 70585).